Here is a 146-residue protein sequence, read N- to C-terminus: 3-dehydroquinate dehydratase (146 aa).

Y23 serves as the catalytic Proton acceptor. The substrate site is built by N75, H81, and D88. Residue H101 is the Proton donor of the active site. Residues 102 to 103 and R112 each bind substrate; that span reads LS.

The protein belongs to the type-II 3-dehydroquinase family. Homododecamer.

The enzyme catalyses 3-dehydroquinate = 3-dehydroshikimate + H2O. Its pathway is metabolic intermediate biosynthesis; chorismate biosynthesis; chorismate from D-erythrose 4-phosphate and phosphoenolpyruvate: step 3/7. Its function is as follows. Catalyzes a trans-dehydration via an enolate intermediate. This is 3-dehydroquinate dehydratase from Marinobacter nauticus (strain ATCC 700491 / DSM 11845 / VT8) (Marinobacter aquaeolei).